A 490-amino-acid chain; its full sequence is Probable G-protein coupled receptor npr-8 (490 aa).

Residues 1-55 (MEVKDIDNYCDRGISPNASNYLTYPFDGLCLQKFFYQLQTSLRRFTPYEEIIYTT) lie on the Extracellular side of the membrane. N-linked (GlcNAc...) asparagine glycosylation occurs at asparagine 17. Residues 56–76 (VYIIISVAAVIGNGLVIMAVV) form a helical membrane-spanning segment. The Cytoplasmic portion of the chain corresponds to 77 to 86 (RKKTMRTNRN). Residues 87-107 (VLILNLALSNLILAITNIPFL) traverse the membrane as a helical segment. At 108-125 (WLPSIDFEFPYSRFFCKF) the chain is on the extracellular side. A helical transmembrane segment spans residues 126 to 146 (ANVLPGSNIYCSTLTISVMAI). At 147 to 166 (DRYYSVKKLKIASNRKQCFH) the chain is on the cytoplasmic side. The helical transmembrane segment at 167–187 (AVLVSLAIWIVSFILSLPLLL) threads the bilayer. Topologically, residues 188 to 236 (YYETSMLYVMREIRVVDQSGQEVIRSYGWRQCRLVSAGRLPDITQSIQL) are extracellular. A helical transmembrane segment spans residues 237-257 (LMSILQVAFLYIVPLFVLSIF). Topologically, residues 258–331 (NVKLTRFLKT…QRTNRTTSLL (74 aa)) are cytoplasmic. Residues 272 to 322 (MSKTRAPPKRFDRSDSHHNSLKNNNNHTSSLRSPSMPSIRSSITERNKTNQ) are disordered. Residues 280–289 (KRFDRSDSHH) are compositionally biased toward basic and acidic residues. Over residues 292–313 (LKNNNNHTSSLRSPSMPSIRSS) the composition is skewed to low complexity. A helical membrane pass occupies residues 332–352 (IAMAGSYAALWFPFTLITFLI). Over 353–374 (DFELIINQDYVNLVERIDQTCK) the chain is Extracellular. Residues 375 to 395 (MVSMLSICVNPFLYGFLNTNF) form a helical membrane-spanning segment. Topologically, residues 396–490 (RHEFSDIYYR…DDDIEKDSFV (95 aa)) are cytoplasmic.

The protein belongs to the G-protein coupled receptor 1 family.

It localises to the cell membrane. Functionally, not known. Putative receptor. The protein is Probable G-protein coupled receptor npr-8 of Caenorhabditis elegans.